The primary structure comprises 435 residues: E3 ubiquitin-protein ligase itt1 (435 aa).

In terms of domain architecture, RWD spans 16–135; sequence DELIALQSIY…EHVRSIATIA (120 aa). The tract at residues 170-420 is TRIAD supradomain; the sequence is RKFQCNVCFD…DPVSSCYGML (251 aa). Zn(2+)-binding residues include Cys-174, Cys-177, Cys-192, His-194, Cys-197, Cys-200, Cys-219, Cys-224, Cys-266, Cys-271, Cys-286, Cys-289, Cys-294, Cys-297, His-302, Cys-308, Cys-368, and Cys-371. The RING-type 1 zinc finger occupies 174-224; sequence CNVCFDEFNGTDCFQLTRCGHVSCQSCLRDYYTMCIQEGMFSQIKCIDLDC. An IBR-type zinc finger spans residues 245 to 308; it reads TNRYKELEEK…ATWHGDLSPC (64 aa). An RING-type 2; atypical zinc finger spans residues 368–396; sequence CPTCDRVVERIDGCCHMNCLCGTHFCFLC. Cys-381 is an active-site residue. Positions 386, 388, 393, 396, 408, and 416 each coordinate Zn(2+).

The protein belongs to the RBR family. RNF14 subfamily.

It is found in the cytoplasm. Its subcellular location is the nucleus. The catalysed reaction is [E2 ubiquitin-conjugating enzyme]-S-ubiquitinyl-L-cysteine + [acceptor protein]-L-lysine = [E2 ubiquitin-conjugating enzyme]-L-cysteine + [acceptor protein]-N(6)-ubiquitinyl-L-lysine.. The protein operates within protein modification; protein ubiquitination. E3 ubiquitin-protein ligase involved in the rescue of stalled ribosomes by promoting ubiquitination and degradation of proteins on stalled ribosomes. Specifically required to resolve RNA-protein cross-links caused by reactive aldehydes, which trigger translation stress by stalling ribosomes: acts by catalying 'Lys-6'-linked ubiquitination of RNA-protein cross-links, leading to their degradation. In Schizosaccharomyces pombe (strain 972 / ATCC 24843) (Fission yeast), this protein is E3 ubiquitin-protein ligase itt1 (itt1).